A 53-amino-acid chain; its full sequence is Rho GTPase-activating protein 6 (53 aa).

It is found in the cytoplasm. Its function is as follows. GTPase activator for the Rho-type GTPases by converting them to an inactive GDP-bound state. Could regulate the interactions of signaling molecules with the actin cytoskeleton. Promotes continuous elongation of cytoplasmic processes during cell motility and simultaneous retraction of the cell body changing the cell morphology. The sequence is that of Rho GTPase-activating protein 6 (arhgap6) from Takifugu rubripes (Japanese pufferfish).